Here is a 522-residue protein sequence, read N- to C-terminus: Cytochrome P450 monooxygenase AKT7 (522 aa).

The helical transmembrane segment at leucine 10–isoleucine 30 threads the bilayer. A heme-binding site is contributed by cysteine 452.

Belongs to the cytochrome P450 family. It depends on heme as a cofactor.

It localises to the membrane. The protein operates within mycotoxin biosynthesis. In terms of biological role, cytochrome P450 monooxygenase; part of the gene clusters that mediate the biosynthesis of the host-selective toxins (HSTs) AK-toxins responsible for Japanese pear black spot disease by the Japanese pear pathotype. AK-toxins are esters of 9,10-epoxy 8-hydroxy 9-methyldecatrienoic acid (EDA). On cellular level, AK-toxins affect plasma membrane of susceptible cells and cause a sudden increase in loss of K(+) after a few minutes of toxin treatment. The acyl-CoA ligase AKT1, the hydrolase AKT2 and enoyl-CoA hydratase AKT3 are all involved in the biosynthesis of the AK-, AF- and ACT-toxin common 9,10-epoxy-8-hydroxy-9-methyl-decatrienoic acid (EDA) structural moiety. Part of the EDA biosynthesis occurs in the peroxisome since these 3 enzymes are localized in peroxisomes. The exact roles of the 3 enzymes, as well as of additional AK-toxin clusters enzymes, including AKT4, AKT6 and AKTS1, have still to be elucidated. The Cytochrome P450 monooxygenase AKT7 on the other side functions to limit production of EDA and AK-toxin, probably via the catalysis of a side reaction of EDA or its precursor. This is Cytochrome P450 monooxygenase AKT7 from Alternaria alternata (Alternaria rot fungus).